The following is a 426-amino-acid chain: Cephalotocin receptor 2 (426 aa).

The Extracellular portion of the chain corresponds to 1–51 (MYQAMEVESTSPSGFFLDFYTQSTIPTTDFLNNTNSSHPIRDEKLVKIEIA). N32 and N35 each carry an N-linked (GlcNAc...) asparagine glycan. The chain crosses the membrane as a helical span at residues 52 to 72 (VLGTCFTLAIINNLCVLLVLL). Topologically, residues 73 to 84 (WRRKKVRRMQMF) are cytoplasmic. The chain crosses the membrane as a helical span at residues 85-105 (ILHLSIADLIVAFFNILPQLI). Topologically, residues 106–120 (WDITFRFMAGDAMCR) are extracellular. C119 and C198 form a disulfide bridge. The chain crosses the membrane as a helical span at residues 121–141 (FIKYAQMFSLYLSTYILIMTA). Topologically, residues 142-165 (VDRYRAICHPLSNQTWTPCMVYCK) are cytoplasmic. The helical transmembrane segment at 166 to 186 (IFIAYAIATIFSIPQAILFQM) threads the bilayer. Topologically, residues 187–208 (QEVNEGSGIYDCWVHFEPAWVL) are extracellular. Residues 209–229 (TAYALYIFFALYLIPILILFF) traverse the membrane as a helical segment. Residues 230-288 (TYGSICYTIWAKYRHAIKTKKDANTRYPQRRKKKGVILRTHSVHGFSKAKLNSVKLTFA) are Cytoplasmic-facing. Residues 289-309 (VIVTYIICWSPFFVSQIWWLF) form a helical membrane-spanning segment. At 310–319 (DETVVGNAGV) the chain is on the extracellular side. Residues 320–340 (VVILLMACLNSCTNPWIYLIF) traverse the membrane as a helical segment. Over 341-426 (NRNYISNVLP…DQFIYSDKTT (86 aa)) the chain is Cytoplasmic. The segment at 373–426 (GSVRRDSRKTSDPKRISESRRISDARRISGKTQKNNSSSPRKTSDQFIYSDKTT) is disordered. Positions 375 to 399 (VRRDSRKTSDPKRISESRRISDARR) are enriched in basic and acidic residues. Positions 402-426 (GKTQKNNSSSPRKTSDQFIYSDKTT) are enriched in polar residues.

It belongs to the G-protein coupled receptor 1 family. Vasopressin/oxytocin receptor subfamily. In terms of tissue distribution, present in various peripheral tissues with highest expression in branchia and vas deferens. Very low expression detected in nervous system.

Its subcellular location is the cell membrane. Acts as a receptor for cephalotocin. This Octopus vulgaris (Common octopus) protein is Cephalotocin receptor 2.